Here is a 484-residue protein sequence, read N- to C-terminus: Malonate-semialdehyde dehydrogenase 3 (484 aa).

The NAD(+) site is built by Phe152, Lys176, Glu179, Arg180, and Ser229. Catalysis depends on Cys284, which acts as the Nucleophile. Glu384 contributes to the NAD(+) binding site.

Belongs to the aldehyde dehydrogenase family. IolA subfamily. In terms of assembly, homotetramer.

It catalyses the reaction 3-oxopropanoate + NAD(+) + CoA + H2O = hydrogencarbonate + acetyl-CoA + NADH + H(+). The catalysed reaction is 2-methyl-3-oxopropanoate + NAD(+) + CoA + H2O = propanoyl-CoA + hydrogencarbonate + NADH + H(+). Its pathway is polyol metabolism; myo-inositol degradation into acetyl-CoA; acetyl-CoA from myo-inositol: step 7/7. Functionally, catalyzes the oxidation of malonate semialdehyde (MSA) and methylmalonate semialdehyde (MMSA) into acetyl-CoA and propanoyl-CoA, respectively. Is involved in a myo-inositol catabolic pathway. Bicarbonate, and not CO2, is the end-product of the enzymatic reaction. The polypeptide is Malonate-semialdehyde dehydrogenase 3 (Geobacillus kaustophilus (strain HTA426)).